A 240-amino-acid chain; its full sequence is Ribonuclease PH (240 aa).

Phosphate-binding positions include Arg87 and 125-127 (GTR).

It belongs to the RNase PH family. Homohexameric ring arranged as a trimer of dimers.

It carries out the reaction tRNA(n+1) + phosphate = tRNA(n) + a ribonucleoside 5'-diphosphate. In terms of biological role, phosphorolytic 3'-5' exoribonuclease that plays an important role in tRNA 3'-end maturation. Removes nucleotide residues following the 3'-CCA terminus of tRNAs; can also add nucleotides to the ends of RNA molecules by using nucleoside diphosphates as substrates, but this may not be physiologically important. Probably plays a role in initiation of 16S rRNA degradation (leading to ribosome degradation) during starvation. The polypeptide is Ribonuclease PH (Pseudomonas fluorescens (strain SBW25)).